The primary structure comprises 108 residues: Nucleoid-associated protein BamMC406_1737 (108 aa).

Polar residues predominate over residues 85–95; sequence ATSQEKMSGMT. Positions 85–108 are disordered; sequence ATSQEKMSGMTSGLPLPPGFKLPF. The span at 99–108 shows a compositional bias: pro residues; it reads PLPPGFKLPF.

The protein belongs to the YbaB/EbfC family. As to quaternary structure, homodimer.

Its subcellular location is the cytoplasm. The protein localises to the nucleoid. Its function is as follows. Binds to DNA and alters its conformation. May be involved in regulation of gene expression, nucleoid organization and DNA protection. The chain is Nucleoid-associated protein BamMC406_1737 from Burkholderia ambifaria (strain MC40-6).